A 375-amino-acid polypeptide reads, in one-letter code: 23S rRNA (uracil(747)-C(5))-methyltransferase RlmC (375 aa).

[4Fe-4S] cluster is bound by residues cysteine 3, cysteine 11, cysteine 14, and cysteine 87. S-adenosyl-L-methionine is bound by residues glutamine 212, phenylalanine 241, glutamate 262, and asparagine 307. Catalysis depends on cysteine 334, which acts as the Nucleophile.

The protein belongs to the class I-like SAM-binding methyltransferase superfamily. RNA M5U methyltransferase family. RlmC subfamily.

The catalysed reaction is uridine(747) in 23S rRNA + S-adenosyl-L-methionine = 5-methyluridine(747) in 23S rRNA + S-adenosyl-L-homocysteine + H(+). Its function is as follows. Catalyzes the formation of 5-methyl-uridine at position 747 (m5U747) in 23S rRNA. The sequence is that of 23S rRNA (uracil(747)-C(5))-methyltransferase RlmC from Xenorhabdus nematophila (strain ATCC 19061 / DSM 3370 / CCUG 14189 / LMG 1036 / NCIMB 9965 / AN6).